Consider the following 610-residue polypeptide: Elongation factor 4 (610 aa).

Positions 11-193 (EKIRNFSIIA…QIVEKVPAPT (183 aa)) constitute a tr-type G domain. GTP contacts are provided by residues 23-28 (DHGKST) and 140-143 (NKID).

It belongs to the TRAFAC class translation factor GTPase superfamily. Classic translation factor GTPase family. LepA subfamily.

Its subcellular location is the cell membrane. The enzyme catalyses GTP + H2O = GDP + phosphate + H(+). Its function is as follows. Required for accurate and efficient protein synthesis under certain stress conditions. May act as a fidelity factor of the translation reaction, by catalyzing a one-codon backward translocation of tRNAs on improperly translocated ribosomes. Back-translocation proceeds from a post-translocation (POST) complex to a pre-translocation (PRE) complex, thus giving elongation factor G a second chance to translocate the tRNAs correctly. Binds to ribosomes in a GTP-dependent manner. The polypeptide is Elongation factor 4 (Streptococcus pyogenes serotype M12 (strain MGAS9429)).